Consider the following 185-residue polypeptide: MADLKQVYHDKVVPELQAKFGYSNVMQVPRLQKIVVNMGVGEAIADKNFLNNAIGNLEAITGQKAQTTYAKKSIAGFKLREGQAVGCRVTLRRRQMWEFLDRLINAALPRVRDFRGVSEKAFDGRGNYTMGIKEQIIFPEIDYDKVDKVRGMDICIVTSAKTDDEARQLLAGFNMPFRKKEGNNG.

The protein belongs to the universal ribosomal protein uL5 family. As to quaternary structure, part of the 50S ribosomal subunit; part of the 5S rRNA/L5/L18/L25 subcomplex. Contacts the 5S rRNA and the P site tRNA. Forms a bridge to the 30S subunit in the 70S ribosome.

Its function is as follows. This is one of the proteins that bind and probably mediate the attachment of the 5S RNA into the large ribosomal subunit, where it forms part of the central protuberance. In the 70S ribosome it contacts protein S13 of the 30S subunit (bridge B1b), connecting the 2 subunits; this bridge is implicated in subunit movement. Contacts the P site tRNA; the 5S rRNA and some of its associated proteins might help stabilize positioning of ribosome-bound tRNAs. This Magnetococcus marinus (strain ATCC BAA-1437 / JCM 17883 / MC-1) protein is Large ribosomal subunit protein uL5.